The following is a 286-amino-acid chain: Homoserine kinase (286 aa).

78-88 (PLARGLGSSSS) provides a ligand contact to ATP.

The protein belongs to the GHMP kinase family. Homoserine kinase subfamily.

The protein localises to the cytoplasm. It catalyses the reaction L-homoserine + ATP = O-phospho-L-homoserine + ADP + H(+). It functions in the pathway amino-acid biosynthesis; L-threonine biosynthesis; L-threonine from L-aspartate: step 4/5. Functionally, catalyzes the ATP-dependent phosphorylation of L-homoserine to L-homoserine phosphate. This Streptococcus equi subsp. equi (strain 4047) protein is Homoserine kinase.